We begin with the raw amino-acid sequence, 118 residues long: T cell receptor gamma variable 3 (118 aa).

The first 17 residues, 1-17 (MRWALLVLLAFLSPASQ), serve as a signal peptide directing secretion. The Ig-like domain maps to 18 to 118 (KSSNLEGRTK…GVYYCATWDR (101 aa)). Cysteines 41 and 113 form a disulfide. A glycan (N-linked (GlcNAc...) asparagine) is linked at Asn106.

Gamma-delta TR is a heterodimer composed of a gamma and delta chain; disulfide-linked. The gamma-delta TR is associated with the transmembrane signaling CD3 coreceptor proteins following the stoichiometry: a single gamma-delta TR heterodimer associates with one CD3D-CD3E heterodimer, one CD3G-CD3E heterodimer and one CD247 homodimer forming a stable octameric structure. Upon activation, gamma-delta TR complex associates with FCER1G to initiate intracellular signaling.

Its subcellular location is the cell membrane. V region of the variable domain of T cell receptor (TR) gamma chain that participates in the antigen recognition. Gamma-delta TRs recognize a variety of self and foreign non-peptide antigens frequently expressed at the epithelial boundaries between the host and external environment, including endogenous lipids presented by MH-like protein CD1D and phosphoantigens presented by butyrophilin-like molecule BTN3A1. Upon antigen recognition induces rapid, innate-like immune responses involved in pathogen clearance and tissue repair. Binding of gamma-delta TR complex to antigen triggers phosphorylation of immunoreceptor tyrosine-based activation motifs (ITAMs) in the CD3 chains by the LCK and FYN kinases, allowing the recruitment, phosphorylation, and activation of ZAP70 that facilitates phosphorylation of the scaffolding proteins LCP2 and LAT. This lead to the formation of a supramolecular signalosome that recruits the phospholipase PLCG1, resulting in calcium mobilization and ERK activation, ultimately leading to T cell expansion and differentiation into effector cells. Gamma-delta TRs are produced through somatic rearrangement of a limited repertoire of variable (V), diversity (D), and joining (J) genes. The potential diversity of gamma-delta TRs is conferred by the unique ability to rearrange (D) genes in tandem and to utilize all three reading frames. The combinatorial diversity is considerably increased by the sequence exonuclease trimming and random nucleotide (N) region additions which occur during the V-(D)-J rearrangements. The protein is T cell receptor gamma variable 3 of Homo sapiens (Human).